Reading from the N-terminus, the 217-residue chain is Large ribosomal subunit protein uL1 (217 aa).

The protein belongs to the universal ribosomal protein uL1 family. Component of the large ribosomal subunit (LSU). Mature N.crassa ribosomes consist of a small (40S) and a large (60S) subunit. The 40S small subunit contains 1 molecule of ribosomal RNA (18S rRNA) and at least 32 different proteins. The large 60S subunit contains 3 rRNA molecules (26S, 5.8S and 5S rRNA) and at least 42 different proteins. uL1 forms part of the L1 stalk.

Its subcellular location is the cytoplasm. Its function is as follows. Component of the ribosome, a large ribonucleoprotein complex responsible for the synthesis of proteins in the cell. The small ribosomal subunit (SSU) binds messenger RNAs (mRNAs) and translates the encoded message by selecting cognate aminoacyl-transfer RNA (tRNA) molecules. The large subunit (LSU) contains the ribosomal catalytic site termed the peptidyl transferase center (PTC), which catalyzes the formation of peptide bonds, thereby polymerizing the amino acids delivered by tRNAs into a polypeptide chain. The nascent polypeptides leave the ribosome through a tunnel in the LSU and interact with protein factors that function in enzymatic processing, targeting, and the membrane insertion of nascent chains at the exit of the ribosomal tunnel. uL1 forms part of the L1 stalk, a mobile element that plays a role in evacuating the exit-site tRNA. The chain is Large ribosomal subunit protein uL1 (crp-74) from Neurospora crassa (strain ATCC 24698 / 74-OR23-1A / CBS 708.71 / DSM 1257 / FGSC 987).